The primary structure comprises 348 residues: MSPALYSAAKSVLFQMNPETAHKVTLWGLRLAEKMRVLPLVMGEVPSDPVEILGMKFPNRVGLAAGMDKEADTVSAFGQAGFGFVEVGTLTPRPQPGNEKPRLFRLIPQKAIINRMGFNNEGIAAGVENIRSATRFHGVLGVNIGKNKITPNEDAAQDYLTCLRAAWPVADYIAINFSSPNTPGLRDLQAAEPAARLLASLKSEQSNLAAETGRHVPIFMKVAPDVTDEHIAELSRVFLDEGLDGLIATNTTLSRVGVEANPRHEEAGGLSGAPLTERSTEVIGAFASELKGRIPIIGVGGIMNGVDAVAKIKAGASLVQLYTGFVYRGPDLIRECVEAMKAECPVHR.

FMN is bound by residues 65–69 (AGMDK) and T89. K69 contacts substrate. Position 114–118 (114–118 (NRMGF)) interacts with substrate. FMN contacts are provided by N143 and N176. N176 lines the substrate pocket. S179 acts as the Nucleophile in catalysis. N181 contacts substrate. Residues K221 and T249 each contribute to the FMN site. Position 250-251 (250-251 (NT)) interacts with substrate. FMN-binding positions include G272, G301, and 322 to 323 (YT).

This sequence belongs to the dihydroorotate dehydrogenase family. Type 2 subfamily. In terms of assembly, monomer. FMN is required as a cofactor.

It localises to the cell membrane. It catalyses the reaction (S)-dihydroorotate + a quinone = orotate + a quinol. It participates in pyrimidine metabolism; UMP biosynthesis via de novo pathway; orotate from (S)-dihydroorotate (quinone route): step 1/1. Functionally, catalyzes the conversion of dihydroorotate to orotate with quinone as electron acceptor. The chain is Dihydroorotate dehydrogenase (quinone) from Akkermansia muciniphila (strain ATCC BAA-835 / DSM 22959 / JCM 33894 / BCRC 81048 / CCUG 64013 / CIP 107961 / Muc).